The primary structure comprises 655 residues: NACHT, LRR and PYD domains-containing protein 10 (655 aa).

In terms of domain architecture, Pyrin spans 1 to 96 (MAMAKARKPR…VDQLSHICLH (96 aa)). In terms of domain architecture, NACHT spans 167 to 484 (SLVVLQGSAG…AMSYLVKEDQ (318 aa)). Residue 173–180 (GSAGTGKT) participates in ATP binding. Over residues 597-609 (QSQNLFSVKSSLS) the composition is skewed to polar residues. A disordered region spans residues 597–655 (QSQNLFSVKSSLSHGPKEEQKCPSVHGQKEGKDNIAGTQKEASTGKGRGTEETPKNTYI). Composition is skewed to basic and acidic residues over residues 611–629 (GPKE…EGKD) and 644–655 (RGTEETPKNTYI).

The protein belongs to the NLRP family. In terms of assembly, oligomerizes. Interacts with PYCARD. Also interacts with CASP1 and IL1B. Interacts with NOD1 and components of the NOD1 signaling pathway including RIPK2, NR2C2/TAK1 and IKBKG/NEMO. Highly expressed in basal and suprabasal epidermal cell layers with lower levels in dermal fibroblast cells (at protein level). Widely expressed with highest levels in heart, brain and skeletal muscle. Also expressed in liver, colon, dermis and epidermis. Little expression detected in myeloid cells or peripheral blood mononuclear cells.

Its subcellular location is the cytoplasm. The protein resides in the cell membrane. Functionally, inhibits autoprocessing of CASP1, CASP1-dependent IL1B secretion, PYCARD aggregation and PYCARD-mediated apoptosis but not apoptosis induced by FAS or BID. Displays anti-inflammatory activity. Required for immunity against C.albicans infection. Involved in the innate immune response by contributing to pro-inflammatory cytokine release in response to invasive bacterial infection. Contributes to T-cell-mediated inflammatory responses in the skin. Plays a role in protection against periodontitis through its involvement in induction of IL1A via ERK activation in oral epithelial cells infected with periodontal pathogens. Exhibits both ATPase and GTPase activities. This chain is NACHT, LRR and PYD domains-containing protein 10 (NLRP10), found in Homo sapiens (Human).